The following is a 317-amino-acid chain: L-lactate dehydrogenase (317 aa).

Residues V17, D38, K43, and G82–A83 contribute to the NAD(+) site. Substrate-binding positions include Q85, R91, and N123–D126. Residues V121 to N123 and S146 contribute to the NAD(+) site. Substrate is bound at residue D151 to R154. Residues R156 and H171 each contribute to the beta-D-fructose 1,6-bisphosphate site. H178 (proton acceptor) is an active-site residue. Y224 bears the Phosphotyrosine mark. T233 contributes to the substrate binding site.

It belongs to the LDH/MDH superfamily. LDH family. Homotetramer.

It localises to the cytoplasm. The catalysed reaction is (S)-lactate + NAD(+) = pyruvate + NADH + H(+). It functions in the pathway fermentation; pyruvate fermentation to lactate; (S)-lactate from pyruvate: step 1/1. Its activity is regulated as follows. Allosterically activated by fructose 1,6-bisphosphate (FBP). Its function is as follows. Catalyzes the conversion of lactate to pyruvate. The chain is L-lactate dehydrogenase from Moorella thermoacetica (strain ATCC 39073 / JCM 9320).